A 345-amino-acid polypeptide reads, in one-letter code: MPRIDADLKLDFKDVLLRPKRSSLKSRSEVDLERTFTFRNSKQTYSGIPVIVANMDTVGTFEMAVVMSQHAMFTAIHKHYSLDDWKHFAENHPECLQHVAVSSGSGQNDLEKMSLILEAVPQVKFICLDVANGYSEHFVEFVKLVRSKFPEHTIMAGNVVTGEMVEELILSGADIIKVGVGPGSVCTTRTKTGVGYPQLSAVIECADSAHGLKGHIISDGSCTCPGDVAKAFGAGADFVMLGGMFSGHTECAGEVIERNGQKLKLFYGMSSDTAMKKHAGGVAEYRASEGKTVEVPYKGDVENTILDILGGLRSTCTYVGAAKLKELSRRATFIRVTQQHNTVFG.

Ser26–Arg27 contributes to the NADP(+) binding site. Position 28 is a phosphoserine (Ser28). NADP(+) is bound by residues Lys78, Asp129–Ala131, and Val180–Gly181. K(+) contacts are provided by Gly181, Gly183, and Cys186. Cys186 serves as the catalytic Thioimidate intermediate. Thr188 functions as the Proton donor/acceptor in the catalytic mechanism. Arg189 serves as a coordination point for K(+). Residues Gly242 to Gly243, Gly268 to Ser270, and Arg286 to Gly290 each bind GMP. Residues Met269, Tyr285–Arg286, and Ser314–Thr317 each bind NADP(+).

The protein belongs to the IMPDH/GMPR family. GuaC type 1 subfamily. Homotetramer.

It catalyses the reaction IMP + NH4(+) + NADP(+) = GMP + NADPH + 2 H(+). Functionally, catalyzes the irreversible NADPH-dependent deamination of GMP to IMP. It functions in the conversion of nucleobase, nucleoside and nucleotide derivatives of G to A nucleotides, and in maintaining the intracellular balance of A and G nucleotides. This chain is GMP reductase 1 (Gmpr), found in Rattus norvegicus (Rat).